The primary structure comprises 924 residues: MVRLRTLVRAIAAASVLTSGMAHGLGLGEITLKSALNQPLDAEIELLEVRDLGSGEVIPSLASPEEFSKAGVDRLYYLTDLKFTPVVKPNGKSVIRVTSSKPVQEPYLNFLVQVLWPNGRLLREYTVLLDPPLYSPQAAASAPQAPVSAPRATGAPRTPQAPAPVRTTAPAGSDTYRTVSNDTLWEIAQRNRTDRVSVPQAMLAFQELNPGAFVDGNINRLKSGQVLRIPTEQQMLERSPREALSQVQAQNQSWRGSRNPAAGTAGARQLDATQRNAAGSAPSKVDATDNLRLVSGEGKASKGADKGGKGDSKAIADTLAVTKESLDSTRRENEELQSRMQDLQSQLDKLQKLIQLKDAQLAKLQGQLGAEGQGAAQPNAALPDASQPNAAAQAPAQPGTPAAAAPTPAPAGEAPAAPAQPPVAPPPAPVAEKPPAPAVPAPAPVQAAEQPAPSFLDELLANPLWLAVIGGSALLALLVLLMILSRRNAQKEKEEAQAFAADAGEEQEDALDLGKDGFDDLTLDEPEPQVAAAAPQVEKTTAQTSDALGEADIYIAYGRFNQAAELLQNAIYDEPQRTDLRLKLMEVYAEMGDREGFARQENELREIGGAQPQVEQLKSRYPAMVAVAAVAGLAGAKLAQDELDSFSLDDLSLDDSGHAAKPDAAGQDLDDAFDLSLDDLGGGDLGSDDVQADLKSDSGALDDLTLDSDLDLAASTAADKPVDDLDFGLDFAELAETPSQPKHDDLGDFSLDLDAPEDKLSDDDFLLSLNDEVPAAAPANNEFTLDTEAAEEPALSLPDDFDLSLADEPTEPAAPEKGEDSFAAQLDEVSAQLDELASNLDEPKSAAPSFSAEDAAVASALDGDADDDFDFLSGADEAATKLDLARAYIDMGDSEGARDILDEVLAEGNDSQQAEARELLERLA.

The signal sequence occupies residues 1 to 24 (MVRLRTLVRAIAAASVLTSGMAHG). Low complexity predominate over residues 140–150 (ASAPQAPVSAP). 3 disordered regions span residues 140 to 176 (ASAP…SDTY), 237 to 312 (ERSP…KGDS), and 372 to 445 (GQGA…PAPV). The 56-residue stretch at 174–229 (DTYRTVSNDTLWEIAQRNRTDRVSVPQAMLAFQELNPGAFVDGNINRLKSGQVLRI) folds into the LysM domain. Polar residues predominate over residues 245-256 (SQVQAQNQSWRG). The span at 299–312 (KASKGADKGGKGDS) shows a compositional bias: basic and acidic residues. The span at 390–417 (AAAQAPAQPGTPAAAAPTPAPAGEAPAA) shows a compositional bias: low complexity. Pro residues predominate over residues 418–443 (PAQPPVAPPPAPVAEKPPAPAVPAPA). Residues 464-484 (LWLAVIGGSALLALLVLLMIL) traverse the membrane as a helical segment. A disordered region spans residues 799–858 (DDFDLSLADEPTEPAAPEKGEDSFAAQLDEVSAQLDELASNLDEPKSAAPSFSAEDAAVA).

Interacts with FimL. Interacts with DgcP.

The protein resides in the cell inner membrane. Its function is as follows. Inner membrane hub protein that plays both cAMP-dependent and cAMP-independent roles in twitching motility. Regulates intracellular cyclic AMP (cAMP) levels through the activation of adenylate cyclase CyaB. Plays an essential role in a number of virulence mechanisms including type IV pilus (T4P)-mediated assembly and twitching motility as well as cAMP-dependent virulence gene expression. Also mediates type II secretion (T2S) of lipases and proteases. In addition, mediates the cAMP-independent localization of multiple T4P structural and regulatory components to the cell poles. This role in directing proteins to the cell pole is not restricted to type IV component and involves other proteins such as the diguanylate cyclase DgcP. The polypeptide is Motility hub protein FimV (fimV) (Pseudomonas aeruginosa (strain UCBPP-PA14)).